Consider the following 426-residue polypeptide: UDP-N-acetylglucosamine 1-carboxyvinyltransferase (426 aa).

Residue 22–23 (KN) coordinates phosphoenolpyruvate. Arg94 contacts UDP-N-acetyl-alpha-D-glucosamine. The active-site Proton donor is Cys118. Residue Cys118 is modified to 2-(S-cysteinyl)pyruvic acid O-phosphothioketal. Residues 123-127 (RPVDL), Asp310, and Ile332 contribute to the UDP-N-acetyl-alpha-D-glucosamine site.

Belongs to the EPSP synthase family. MurA subfamily.

The protein localises to the cytoplasm. The catalysed reaction is phosphoenolpyruvate + UDP-N-acetyl-alpha-D-glucosamine = UDP-N-acetyl-3-O-(1-carboxyvinyl)-alpha-D-glucosamine + phosphate. The protein operates within cell wall biogenesis; peptidoglycan biosynthesis. Functionally, cell wall formation. Adds enolpyruvyl to UDP-N-acetylglucosamine. This chain is UDP-N-acetylglucosamine 1-carboxyvinyltransferase, found in Hyphomonas neptunium (strain ATCC 15444).